The following is a 225-amino-acid chain: Membrane protein (225 aa).

Residues 1–20 (MSNETNCTLDFEQSVQLFKE) are Virion surface-facing. N3 and N6 each carry an N-linked (GlcNAc...) asparagine; by host glycan. The helical transmembrane segment at 21–41 (YNLFITAFLLFLTIILQYGYA) threads the bilayer. The Intravirion segment spans residues 42-51 (TRSKVIYTLK). The chain crosses the membrane as a helical span at residues 52 to 72 (MIVLWCFWPLNIAVGVISCIY). Residues 73 to 77 (PPNTG) lie on the Virion surface side of the membrane. The chain crosses the membrane as a helical span at residues 78–98 (GLVAAIILTVFACLSFVGYWI). Over 99-225 (QSIRLFKRCR…VATGGSSLYT (127 aa)) the chain is Intravirion.

This sequence belongs to the gammacoronaviruses M protein family. In terms of assembly, homomultimer. Interacts with envelope E protein in the budding compartment of the host cell, which is located between endoplasmic reticulum and the Golgi complex. Forms a complex with HE and S proteins. Interacts with nucleocapsid N protein. This interaction probably participates in RNA packaging into the virus.

It localises to the virion membrane. The protein resides in the host Golgi apparatus membrane. Its function is as follows. Component of the viral envelope that plays a central role in virus morphogenesis and assembly via its interactions with other viral proteins. In Gallus gallus (Chicken), this protein is Membrane protein.